The following is a 536-amino-acid chain: Membrane protein insertase YidC (536 aa).

The helical transmembrane segment at Ala-5 to Pro-25 threads the bilayer. A disordered region spans residues Ala-30 to Val-54. Low complexity predominate over residues Pro-31–Val-54. The next 4 helical transmembrane spans lie at Tyr-350–His-370, Leu-420–Ile-440, Leu-454–Gln-474, and Pro-494–Val-514.

The protein belongs to the OXA1/ALB3/YidC family. Type 1 subfamily. Interacts with the Sec translocase complex via SecD. Specifically interacts with transmembrane segments of nascent integral membrane proteins during membrane integration.

The protein localises to the cell inner membrane. Required for the insertion and/or proper folding and/or complex formation of integral membrane proteins into the membrane. Involved in integration of membrane proteins that insert both dependently and independently of the Sec translocase complex, as well as at least some lipoproteins. Aids folding of multispanning membrane proteins. The polypeptide is Membrane protein insertase YidC (Geobacter metallireducens (strain ATCC 53774 / DSM 7210 / GS-15)).